Here is a 245-residue protein sequence, read N- to C-terminus: Adenosylcobinamide-GDP ribazoletransferase (245 aa).

5 helical membrane-spanning segments follow: residues 35-55, 108-128, 137-157, 176-196, and 197-217; these read WFPLAGLVVGGACWLPFALGL, IGAFGVMGLLLGFGGQYIGAH, GVLIAAPIVGRGACVILAALV, IAIGVAATCGMLALLLTTPAI, and TTVTTIAICGAIVTALAHLAR.

The protein belongs to the CobS family. Mg(2+) serves as cofactor.

Its subcellular location is the cell inner membrane. The enzyme catalyses alpha-ribazole + adenosylcob(III)inamide-GDP = adenosylcob(III)alamin + GMP + H(+). The catalysed reaction is alpha-ribazole 5'-phosphate + adenosylcob(III)inamide-GDP = adenosylcob(III)alamin 5'-phosphate + GMP + H(+). It participates in cofactor biosynthesis; adenosylcobalamin biosynthesis; adenosylcobalamin from cob(II)yrinate a,c-diamide: step 7/7. Joins adenosylcobinamide-GDP and alpha-ribazole to generate adenosylcobalamin (Ado-cobalamin). Also synthesizes adenosylcobalamin 5'-phosphate from adenosylcobinamide-GDP and alpha-ribazole 5'-phosphate. The protein is Adenosylcobinamide-GDP ribazoletransferase of Nitratidesulfovibrio vulgaris (strain ATCC 29579 / DSM 644 / CCUG 34227 / NCIMB 8303 / VKM B-1760 / Hildenborough) (Desulfovibrio vulgaris).